Reading from the N-terminus, the 346-residue chain is Annexin A1 (346 aa).

Residue Ser5 is modified to Phosphoserine; by TRPM7. An Isoglutamyl lysine isopeptide (Gln-Lys) (interchain with K-?) cross-link involves residue Gln19. A Phosphotyrosine; by EGFR modification is found at Tyr21. Ser34 and Ser37 each carry phosphoserine. 4 Annexin repeats span residues 42–113, 114–185, 197–269, and 273–344; these read FNPS…ALLK, TPAR…SLAK, DLAD…AIVK, and SKPM…ALCG. Lys58 is subject to N6-acetyllysine. Ca(2+) contacts are provided by Gly59, Val60, Glu62, Lys97, Leu100, Glu105, Met127, Gly129, Gly131, Thr132, and Glu134. Position 136 is a phosphothreonine (Thr136). Positions 171, 210, and 213 each coordinate Ca(2+). Lys214 is covalently cross-linked (Glycyl lysine isopeptide (Lys-Gly) (interchain with G-Cter in SUMO1); alternate). Lys214 participates in a covalent cross-link: Glycyl lysine isopeptide (Lys-Gly) (interchain with G-Cter in SUMO2); alternate. Residues Gly215, Asp253, Glu255, and Met256 each coordinate Ca(2+). Lys257 is covalently cross-linked (Glycyl lysine isopeptide (Lys-Gly) (interchain with G-Cter in SUMO1)). The Ca(2+) site is built by Glu261, Met286, Gly288, and Gly290. Residue Lys312 is modified to N6-acetyllysine. Residues Cys324 and Cys343 are joined by a disulfide bond. 3 residues coordinate Ca(2+): Leu328, Glu330, and Thr331. A Glycyl lysine isopeptide (Lys-Gly) (interchain with G-Cter in SUMO1) cross-link involves residue Lys332. Position 336 (Glu336) interacts with Ca(2+).

The protein belongs to the annexin family. Homodimer; non-covalently linked. Homodimer; linked by transglutamylation. Homodimers linked by transglutamylation are observed in placenta, but not in other tissues. Interacts with S100A11. Heterotetramer, formed by two molecules each of S100A11 and ANXA1. Interacts with DYSF. Interacts with EGFR. Post-translationally, phosphorylated by protein kinase C, EGFR and TRPM7. Phosphorylated in response to EGF treatment. In terms of processing, sumoylated. Proteolytically cleaved by cathepsin CTSG to release the active N-terminal peptide Ac2-26.

The protein localises to the nucleus. It localises to the cytoplasm. The protein resides in the cell projection. It is found in the cilium. Its subcellular location is the basolateral cell membrane. The protein localises to the lateral cell membrane. It localises to the cell membrane. The protein resides in the apical cell membrane. It is found in the membrane. Its subcellular location is the early endosome. The protein localises to the cytoplasmic vesicle membrane. It localises to the endosome membrane. The protein resides in the secreted. It is found in the extracellular space. Its subcellular location is the extracellular exosome. The protein localises to the cytoplasmic vesicle. It localises to the secretory vesicle lumen. The protein resides in the phagocytic cup. Functionally, plays important roles in the innate immune response as effector of glucocorticoid-mediated responses and regulator of the inflammatory process. Has anti-inflammatory activity. Plays a role in glucocorticoid-mediated down-regulation of the early phase of the inflammatory response. Contributes to the adaptive immune response by enhancing signaling cascades that are triggered by T-cell activation, regulates differentiation and proliferation of activated T-cells. Promotes the differentiation of T-cells into Th1 cells and negatively regulates differentiation into Th2 cells. Has no effect on unstimulated T-cells. Negatively regulates hormone exocytosis via activation of the formyl peptide receptors and reorganization of the actin cytoskeleton. Has high affinity for Ca(2+) and can bind up to eight Ca(2+) ions. Displays Ca(2+)-dependent binding to phospholipid membranes. Plays a role in the formation of phagocytic cups and phagosomes. Plays a role in phagocytosis by mediating the Ca(2+)-dependent interaction between phagosomes and the actin cytoskeleton. Functions at least in part by activating the formyl peptide receptors and downstream signaling cascades. Promotes chemotaxis of granulocytes and monocytes via activation of the formyl peptide receptors. Promotes rearrangement of the actin cytoskeleton, cell polarization and cell migration. Promotes resolution of inflammation and wound healing. Acts via neutrophil N-formyl peptide receptors to enhance the release of CXCL2. The sequence is that of Annexin A1 (ANXA1) from Equus caballus (Horse).